Here is a 140-residue protein sequence, read N- to C-terminus: uncharacterized protein (140 aa).

Residues 1–19 (MGLCGSKTQPMPSQTTTVA) show a composition bias toward polar residues. Residues 1–140 (MGLCGSKTQP…ERERENMIYD (140 aa)) form a disordered region. A lipid anchor (N-myristoyl glycine) is attached at G2. Residue C4 is the site of S-palmitoyl cysteine attachment. The segment covering 27 to 40 (INRDTVKSKQELRH) has biased composition (basic and acidic residues). The span at 41–51 (KEKKDKKKKTQ) shows a compositional bias: basic residues. Basic and acidic residues predominate over residues 73 to 140 (DPSKNKVSPK…ERERENMIYD (68 aa)).

It to S.pombe new13. Post-translationally, myristoylated. In terms of processing, the N-myristoylated protein is further palmitoylated by ERF2, PFA4 and slightly by PFA5, but not by PFA3.

It localises to the cytoplasm. The protein localises to the cytosol. This is an uncharacterized protein from Saccharomyces cerevisiae (strain ATCC 204508 / S288c) (Baker's yeast).